A 1013-amino-acid polypeptide reads, in one-letter code: GTPase-activating Rap/Ran-GAP domain-like protein 3 (1013 aa).

Ser45 carries the post-translational modification Phosphoserine. The 217-residue stretch at 191–407 (LLVLEEQEGS…RTLDMLIRSL (217 aa)) folds into the Rap-GAP domain. 2 positions are modified to phosphoserine: Ser426 and Ser432. The 312-residue stretch at 489–800 (PHEAVCADPW…QLVASRSDIY (312 aa)) folds into the CNH domain. Disordered regions lie at residues 810 to 842 (VSSG…SLGE) and 913 to 1013 (LLGL…IDLK). The span at 811–821 (SSGGSSKGASA) shows a compositional bias: low complexity. Residue Thr827 is modified to Phosphothreonine. Low complexity predominate over residues 952 to 962 (SSSSDRIPSGS). Polar residues-rich tracts occupy residues 963–982 (LESA…SSDQ) and 993–1003 (VSGSSPFQLTA).

This sequence belongs to the GARNL3 family.

The polypeptide is GTPase-activating Rap/Ran-GAP domain-like protein 3 (GARNL3) (Homo sapiens (Human)).